The chain runs to 466 residues: Vimentin (466 aa).

The span at 1-13 shows a compositional bias: low complexity; that stretch reads MSTRSVSSSSYRR. A disordered region spans residues 1 to 32; that stretch reads MSTRSVSSSSYRRMFGGPGTGSRPSSTRSYVT. An N-acetylserine modification is found at Ser-2. The head stretch occupies residues 2-95; it reads STRSVSSSSY…FSLADAINTE (94 aa). 5 positions are modified to phosphoserine: Ser-5, Ser-7, Ser-8, Ser-9, and Ser-10. Ser-7 carries O-linked (GlcNAc) serine; alternate glycosylation. Phosphothreonine is present on Thr-20. The span at 21 to 32 shows a compositional bias: low complexity; sequence GSRPSSTRSYVT. Residues Ser-25 and Ser-26 each carry the phosphoserine modification. O-linked (GlcNAc) threonine glycosylation is present at Thr-33. 6 positions are modified to phosphoserine: Ser-34, Ser-39, Ser-42, Ser-47, Ser-49, and Ser-51. O-linked (GlcNAc) serine; alternate glycosylation is present at Ser-34. Residue Tyr-53 is modified to Phosphotyrosine. Ser-55 and Ser-56 each carry phosphoserine. Residue Tyr-61 is modified to Phosphotyrosine. 5 positions are modified to phosphoserine: Ser-66, Ser-72, Ser-73, Ser-83, and Ser-87. Residues 96–131 are coil 1A; sequence FKNTRTNEKVELQELNDRFANYIDKVRFLEQQNKIL. Residues 96-131 are a coiled coil; sequence FKNTRTNEKVELQELNDRFANYIDKVRFLEQQNKIL. Residues 103–411 enclose the IF rod domain; that stretch reads EKVELQELND…KLLEGEESRI (309 aa). Residue Lys-104 forms a Glycyl lysine isopeptide (Lys-Gly) (interchain with G-Cter in SUMO2) linkage. A Phosphotyrosine modification is found at Tyr-117. N6-acetyllysine; alternate occurs at positions 120, 129, and 139. N6-succinyllysine; alternate is present on residues Lys-120 and Lys-129. Residues Lys-120, Lys-129, and Lys-139 each participate in a glycyl lysine isopeptide (Lys-Gly) (interchain with G-Cter in SUMO2); alternate cross-link. The segment at 132–153 is linker 1; the sequence is LAELEQLKGQGKSRLGDLYEEE. Ser-144 is subject to Phosphoserine. Residues 154–245 are a coiled coil; the sequence is MRELRRQVDQ…KLHDEEIQEL (92 aa). Residues 154 to 245 are coil 1B; it reads MRELRRQVDQ…KLHDEEIQEL (92 aa). Residue Lys-168 is modified to N6-acetyllysine. The residue at position 188 (Lys-188) is an N6-acetyllysine; alternate. At Lys-188 the chain carries N6-succinyllysine; alternate. Ser-214 carries the phosphoserine modification. Lys-223 carries the N6-acetyllysine; alternate modification. Lys-223 is covalently cross-linked (Glycyl lysine isopeptide (Lys-Gly) (interchain with G-Cter in SUMO2); alternate). Ser-226 is subject to Phosphoserine. An N6-acetyllysine modification is found at Lys-235. Positions 246–268 are linker 12; sequence QAQIQDQHVQIDMDVSKPDLTAA. Lys-262 is covalently cross-linked (Glycyl lysine isopeptide (Lys-Gly) (interchain with G-Cter in SUMO2)). A coil 2 region spans residues 269-407; it reads LRDVRQQYES…ATYRKLLEGE (139 aa). Residue Lys-294 is modified to N6-acetyllysine; alternate. At Lys-294 the chain carries N6-succinyllysine; alternate. Lys-294 is covalently cross-linked (Glycyl lysine isopeptide (Lys-Gly) (interchain with G-Cter in SUMO2); alternate). Ser-299 is subject to Phosphoserine. The stretch at 303-407 forms a coiled coil; it reads NRNNDALRQA…ATYRKLLEGE (105 aa). Residue Lys-313 forms a Glycyl lysine isopeptide (Lys-Gly) (interchain with G-Cter in SUMO2) linkage. Position 325 is a phosphoserine (Ser-325). Positions 326–329 match the [IL]-x-C-x-x-[DE] motif motif; that stretch reads LTCE. At Lys-373 the chain carries N6-acetyllysine; alternate. Lys-373 participates in a covalent cross-link: Glycyl lysine isopeptide (Lys-Gly) (interchain with G-Cter in SUMO2); alternate. Residues 408–466 are tail; sequence ESRIALPLPNFSSLNLRETNLDSLPLVDTHSKRTLLIKTVETRDGQVINETSQHHDDLE. Ser-409, Ser-419, and Ser-420 each carry phosphoserine. At Thr-426 the chain carries Phosphothreonine. Residue Ser-430 is modified to Phosphoserine. Thr-436 bears the Phosphothreonine mark. At Ser-438 the chain carries Phosphoserine. Lys-439 is covalently cross-linked (Glycyl lysine isopeptide (Lys-Gly) (interchain with G-Cter in SUMO2)). Residue Lys-445 is modified to N6-acetyllysine; alternate. An N6-succinyllysine; alternate modification is found at Lys-445. Residue Lys-445 forms a Glycyl lysine isopeptide (Lys-Gly) (interchain with G-Cter in SUMO2); alternate linkage. A Glycyl lysine isopeptide (Lys-Gly) (interchain with G-Cter in SUMO1); alternate cross-link involves residue Lys-445. Phosphothreonine is present on residues Thr-446 and Thr-458. Ser-459 is subject to Phosphoserine.

The protein belongs to the intermediate filament family. In terms of assembly, homomer assembled from elementary dimers. Identified in complexes that contain VIM, EZR, AHNAK, BFSP1, BFSP2, ANK2, PLEC, PRX and spectrin. Interacts with BCAS3. Interacts with LGSN. Interacts with SYNM. Interacts (via rod region) with PLEC (via CH 1 domain). Interacts with STK33. Interacts with LARP6. Interacts with RAB8B. Interacts with TOR1A; the interaction associates TOR1A with the cytoskeleton. Interacts with TOR1AIP1. Interacts with TOR1AIP1. Interacts with DIAPH1. Interacts with EPPK1; interaction is dependent of higher-order structure of intermediate filament. Interacts with the non-receptor tyrosine kinase SRMS; the interaction leads to phosphorylation of VIM. Interacts with NOD2. Interacts (via head region) with CORO1C. Interacts with HDGF. Interacts with PRKCE (via phorbol-ester/DAG-type 2 domain). Interacts with BFSP2. Interacts with PPL. Interacts with PKP1 and PKP2. Interacts with SCRIB (via PDZ domains); the interaction protects SCRIB from proteasomal degradation and facilitates SCRIB localization to intermediate filaments, the interaction is reduced by cell contact inhibition. In terms of processing, filament disassembly during mitosis is promoted by phosphorylation at Ser-55 as well as by nestin. One of the most prominent phosphoproteins in various cells of mesenchymal origin. Phosphorylation is enhanced during cell division, at which time vimentin filaments are significantly reorganized. Phosphorylation by PKN1 inhibits the formation of filaments. Phosphorylated at Ser-56 by CDK5 during neutrophil secretion in the cytoplasm. Phosphorylated by STK33. Phosphorylated on tyrosine residues by SRMS. O-glycosylated during cytokinesis at sites identical or close to phosphorylation sites, this interferes with the phosphorylation status. Post-translationally, S-nitrosylation is induced by interferon-gamma and oxidatively-modified low-densitity lipoprotein (LDL(ox)) possibly implicating the iNOS-S100A8/9 transnitrosylase complex.

It is found in the cytoplasm. Its subcellular location is the cytoskeleton. The protein localises to the nucleus matrix. It localises to the cell membrane. Vimentins are class-III intermediate filaments found in various non-epithelial cells, especially mesenchymal cells. Vimentin is attached to the nucleus, endoplasmic reticulum, and mitochondria, either laterally or terminally. Plays a role in cell directional movement, orientation, cell sheet organization and Golgi complex polarization at the cell migration front. Protects SCRIB from proteasomal degradation and facilitates its localization to intermediate filaments in a cell contact-mediated manner. Functionally, involved with LARP6 in the stabilization of type I collagen mRNAs for CO1A1 and CO1A2. The chain is Vimentin (VIM) from Canis lupus familiaris (Dog).